The primary structure comprises 113 residues: U11-theraphotoxin-Hhn1u (113 aa).

Positions 1–21 are cleaved as a signal peptide; sequence MNTVRVTFLLVFVLAVSLGQA. Positions 22-74 are excised as a propeptide; sequence DKDENRMEMQEKTEQGKSYLDFAENLLLQKLEELEAKLLEEDSEESRNSRQKR. 3 disulfide bridges follow: Cys-75–Cys-90, Cys-82–Cys-95, and Cys-89–Cys-110.

It belongs to the neurotoxin 14 (magi-1) family. 01 (HNTX-16) subfamily. As to expression, expressed by the venom gland.

The protein resides in the secreted. Functionally, probable ion channel inhibitor. The polypeptide is U11-theraphotoxin-Hhn1u (Cyriopagopus hainanus (Chinese bird spider)).